Reading from the N-terminus, the 247-residue chain is Cell division protein ZapD (247 aa).

The protein belongs to the ZapD family. As to quaternary structure, interacts with FtsZ.

It is found in the cytoplasm. Functionally, cell division factor that enhances FtsZ-ring assembly. Directly interacts with FtsZ and promotes bundling of FtsZ protofilaments, with a reduction in FtsZ GTPase activity. This Citrobacter koseri (strain ATCC BAA-895 / CDC 4225-83 / SGSC4696) protein is Cell division protein ZapD.